The following is a 222-amino-acid chain: Arginine ABC transporter permease protein ArtM (222 aa).

The Periplasmic portion of the chain corresponds to 1 to 15; the sequence is MFEYLPELMKGLHTS. The 197-residue stretch at 12-208 folds into the ABC transmembrane type-1 domain; sequence LHTSLTLTVA…VVNGLLTLMM (197 aa). Residues 16-36 form a helical membrane-spanning segment; the sequence is LTLTVASLIVALILALIFTII. The Cytoplasmic segment spans residues 37-49; the sequence is LTLKTPVLVWLVR. The helical transmembrane segment at 50-70 threads the bilayer; it reads GYITLFTGTPLLVQIFLIYYG. Topologically, residues 71 to 79 are periplasmic; the sequence is PGQFPTLQE. Residues 80–100 traverse the membrane as a helical segment; sequence YPALWHLLSEPWLCALIALSL. At 101-154 the chain is on the cytoplasmic side; sequence NSAAYTTQLFYGAIRAIPEGQWQSCSALGMSKKDTLAILLPYAFKRSLSSYSNE. A helical membrane pass occupies residues 155-175; that stretch reads VVLVFKSTSLAYTITLMEVMG. Over 176 to 186 the chain is Periplasmic; that stretch reads YSQLLYGRTYD. A helical membrane pass occupies residues 187-207; sequence VMVFGAAGIIYLVVNGLLTLM. The Cytoplasmic segment spans residues 208–222; sequence MRLIERKALAFERRN.

It belongs to the binding-protein-dependent transport system permease family. HisMQ subfamily. The complex is composed of two ATP-binding proteins (ArtP), two transmembrane proteins (ArtM and ArtQ) and two solute-binding proteins (ArtJ and ArtI).

Its subcellular location is the cell inner membrane. In terms of biological role, part of the ABC transporter complex ArtPIQMJ involved in arginine transport. Probably responsible for the translocation of the substrate across the membrane. This chain is Arginine ABC transporter permease protein ArtM (artM), found in Escherichia coli (strain K12).